The sequence spans 126 residues: MARILGVDIPDNKRGEIALTYIFGIGRSSANQILAAAGVNKDKRVSSWTDEESQTIRTVINENYKVEGELKSEIRLNIKRLVDIGCYRGRRHVLGLPVRGQSTKNNARTRKGKRKTVANKKKAAKK.

The tract at residues 98–126 is disordered; the sequence is VRGQSTKNNARTRKGKRKTVANKKKAAKK. Positions 107-126 are enriched in basic residues; it reads ARTRKGKRKTVANKKKAAKK.

It belongs to the universal ribosomal protein uS13 family. In terms of assembly, part of the 30S ribosomal subunit. Forms a loose heterodimer with protein S19. Forms two bridges to the 50S subunit in the 70S ribosome.

Located at the top of the head of the 30S subunit, it contacts several helices of the 16S rRNA. In the 70S ribosome it contacts the 23S rRNA (bridge B1a) and protein L5 of the 50S subunit (bridge B1b), connecting the 2 subunits; these bridges are implicated in subunit movement. Contacts the tRNAs in the A and P-sites. In Amoebophilus asiaticus (strain 5a2), this protein is Small ribosomal subunit protein uS13.